Consider the following 189-residue polypeptide: UPF0301 protein RrIowa_0061 (189 aa).

It belongs to the UPF0301 (AlgH) family.

This chain is UPF0301 protein RrIowa_0061, found in Rickettsia rickettsii (strain Iowa).